The primary structure comprises 405 residues: Cysteine desulfurase IscS (405 aa).

Pyridoxal 5'-phosphate is bound by residues 75–76 (AT), N156, Q184, and 204–206 (SAH). K207 carries the N6-(pyridoxal phosphate)lysine modification. T244 serves as a coordination point for pyridoxal 5'-phosphate. Residue C329 is the Cysteine persulfide intermediate of the active site. C329 is a binding site for [2Fe-2S] cluster.

The protein belongs to the class-V pyridoxal-phosphate-dependent aminotransferase family. NifS/IscS subfamily. In terms of assembly, homodimer. Forms a heterotetramer with IscU, interacts with other sulfur acceptors. Pyridoxal 5'-phosphate is required as a cofactor.

The protein resides in the cytoplasm. The enzyme catalyses (sulfur carrier)-H + L-cysteine = (sulfur carrier)-SH + L-alanine. It functions in the pathway cofactor biosynthesis; iron-sulfur cluster biosynthesis. In terms of biological role, master enzyme that delivers sulfur to a number of partners involved in Fe-S cluster assembly, tRNA modification or cofactor biosynthesis. Catalyzes the removal of elemental sulfur atoms from cysteine to produce alanine. Functions as a sulfur delivery protein for Fe-S cluster synthesis onto IscU, an Fe-S scaffold assembly protein, as well as other S acceptor proteins. The protein is Cysteine desulfurase IscS of Acinetobacter baumannii (strain AB307-0294).